Reading from the N-terminus, the 1259-residue chain is Ankyrin repeat and sterile alpha motif domain-containing protein 1B (1259 aa).

ANK repeat units lie at residues 2-31, 58-87, 91-120, 127-156, 160-189, 193-222, and 225-254; these read GKDQ…GGIL, SGYT…STNV, KGYF…SHSR, ENET…DPTI, KLET…NLMS, RKHT…DVSC, and EKGS…DANI. A disordered region spans residues 298-325; sequence HAQEDTAQETHLSSPAESPQKTKSETVT. The span at 306 to 325 shows a compositional bias: polar residues; it reads ETHLSSPAESPQKTKSETVT. 5 positions are modified to phosphoserine: serine 310, serine 311, serine 315, serine 353, and serine 364. 4 disordered regions span residues 367 to 401, 490 to 513, 556 to 614, and 631 to 661; these read ELGK…SCGP, PGTS…SPDT, CTSF…GSSP, and TCED…EPSV. The span at 371–384 shows a compositional bias: polar residues; sequence NGSQSVRTSSTINL. A Phosphothreonine modification is found at threonine 503. A phosphoserine mark is found at serine 507 and serine 510. Over residues 556–574 the composition is skewed to low complexity; the sequence is CTSFTSSPAASPPTSSVET. Over residues 575–587 the composition is skewed to basic and acidic residues; sequence TEVKNEGAEHADD. At serine 738 the chain carries Phosphoserine. Residues 753–776 are disordered; it reads VNWSKSSTAERSSKDNSERTPSFT. A Phosphothreonine modification is found at threonine 772. Phosphoserine is present on serine 774. 2 consecutive SAM domains span residues 809-875 and 883-948; these read CPVQ…LPKM and YHPT…RLHD. Phosphotyrosine is present on tyrosine 900. Position 934 (histidine 934) is a short sequence motif, nuclear localization signal. The interval 943 to 988 is disordered; it reads GDRLHDDPPQKPPRSITLREPSGNHTPPQLSPSLSQSTYTTGGSLD. A compositionally biased stretch (low complexity) spans 968–983; it reads TPPQLSPSLSQSTYTT. A Phosphoserine modification is found at serine 973. Tyrosine 1006 carries the phosphotyrosine modification. One can recognise a PID domain in the interval 1055–1212; that stretch reads IFQSCDYKAF…SFENKPSKPI (158 aa). The interval 1196 to 1216 is disordered; that stretch reads HSSTLPESFENKPSKPIPKPR.

In terms of assembly, interacts with EPHA8. Isoform 2 interacts with COIL.

It is found in the cytoplasm. The protein localises to the nucleus. The protein resides in the postsynaptic density. It localises to the cell projection. Its subcellular location is the dendritic spine. Its function is as follows. Isoform 2 may participate in the regulation of nucleoplasmic coilin protein interactions in neuronal and transformed cells. The polypeptide is Ankyrin repeat and sterile alpha motif domain-containing protein 1B (Anks1b) (Mus musculus (Mouse)).